The sequence spans 268 residues: WUSCHEL-related homeobox 11 (268 aa).

A disordered region spans residues 1–35 (MDQEQTPHSPTRHSRSPPSSASGSTSAEPVRSRWS). Low complexity predominate over residues 16–27 (SPPSSASGSTSA). The homeobox; WUS-type DNA-binding region spans 29-93 (PVRSRWSPKP…NRRSRSRRRQ (65 aa)).

Belongs to the WUS homeobox family.

Its subcellular location is the nucleus. Its function is as follows. Transcription factor which may be involved in developmental processes. The sequence is that of WUSCHEL-related homeobox 11 (WOX11) from Arabidopsis thaliana (Mouse-ear cress).